A 310-amino-acid chain; its full sequence is 4-diphosphocytidyl-2-C-methyl-D-erythritol kinase (310 aa).

Lys20 is an active-site residue. 106–116 (PMGGGLGGGSS) is an ATP binding site. The active site involves Asp148.

The protein belongs to the GHMP kinase family. IspE subfamily. Homodimer.

The enzyme catalyses 4-CDP-2-C-methyl-D-erythritol + ATP = 4-CDP-2-C-methyl-D-erythritol 2-phosphate + ADP + H(+). It functions in the pathway isoprenoid biosynthesis; isopentenyl diphosphate biosynthesis via DXP pathway; isopentenyl diphosphate from 1-deoxy-D-xylulose 5-phosphate: step 3/6. Functionally, catalyzes the phosphorylation of the position 2 hydroxy group of 4-diphosphocytidyl-2C-methyl-D-erythritol. The sequence is that of 4-diphosphocytidyl-2-C-methyl-D-erythritol kinase from Yersinia pseudotuberculosis serotype O:3 (strain YPIII).